A 520-amino-acid chain; its full sequence is GMP synthase [glutamine-hydrolyzing] (520 aa).

The Glutamine amidotransferase type-1 domain occupies Ser9–Asp202. Cys86 serves as the catalytic Nucleophile. Active-site residues include His176 and Glu178. The GMPS ATP-PPase domain maps to Trp203 to Arg395. Ser230–Ser236 serves as a coordination point for ATP.

In terms of assembly, homodimer.

It catalyses the reaction XMP + L-glutamine + ATP + H2O = GMP + L-glutamate + AMP + diphosphate + 2 H(+). Its pathway is purine metabolism; GMP biosynthesis; GMP from XMP (L-Gln route): step 1/1. Its function is as follows. Catalyzes the synthesis of GMP from XMP. This chain is GMP synthase [glutamine-hydrolyzing], found in Rhizobium etli (strain ATCC 51251 / DSM 11541 / JCM 21823 / NBRC 15573 / CFN 42).